A 401-amino-acid polypeptide reads, in one-letter code: Nodulation protein E (401 aa).

Positions 2–400 (DRRVVITGMG…GTNAVLAFKQ (399 aa)) constitute a Ketosynthase family 3 (KS3) domain. Residues cysteine 161, histidine 293, and histidine 330 each act as for beta-ketoacyl synthase activity in the active site. The helical transmembrane segment at 328–347 (HAHCIGAASALEMIACVMAI) threads the bilayer.

This sequence belongs to the thiolase-like superfamily. Beta-ketoacyl-ACP synthases family.

It localises to the cell inner membrane. Proposed to synthesize NOD factor fatty acyl chain. Involved in the synthesis of a highly unsaturated fatty acid moiety, which forms part of a lipo-oligosaccharide that is responsible for host specificity. In Rhizobium meliloti (Ensifer meliloti), this protein is Nodulation protein E (nodE).